A 505-amino-acid polypeptide reads, in one-letter code: Deoxyguanosinetriphosphate triphosphohydrolase (505 aa).

The HD domain maps to 66–273 (RLTHSMEVQQ…MEAADDISYC (208 aa)).

Belongs to the dGTPase family. Type 1 subfamily. In terms of assembly, homotetramer. The cofactor is Mg(2+).

The enzyme catalyses dGTP + H2O = 2'-deoxyguanosine + triphosphate + H(+). In terms of biological role, dGTPase preferentially hydrolyzes dGTP over the other canonical NTPs. This is Deoxyguanosinetriphosphate triphosphohydrolase from Escherichia coli O81 (strain ED1a).